The following is a 527-amino-acid chain: Catalase (527 aa).

A compositionally biased stretch (basic and acidic residues) spans 1–22 (MADNRDPASDQMKHWKEQRAAQ). Residues 1-42 (MADNRDPASDQMKHWKEQRAAQKPDVLTTGGGNPVGDKLNSL) are disordered. Ala-2 is subject to Blocked amino end (Ala); alternate. An N-acetylalanine; alternate modification is found at Ala-2. Ser-9 is subject to Phosphoserine. Lys-13 bears the N6-succinyllysine mark. Residues His-75 and Asn-148 contribute to the active site. The NADP(+) site is built by His-194, Phe-198, Ser-201, Arg-203, Asn-213, and Tyr-215. Residue Lys-221 is modified to N6-succinyllysine. An N6-acetyllysine modification is found at Lys-233. Residues Lys-237, Trp-303, and His-305 each coordinate NADP(+). Heme is bound at residue Tyr-358. Phosphoserine is present on residues Ser-417 and Ser-434. 3 residues coordinate NADP(+): Gln-442, Thr-445, and Phe-446. An N6-acetyllysine; alternate mark is found at Lys-449 and Lys-480. Residues Lys-449 and Lys-480 each carry the N6-succinyllysine; alternate modification. Lys-499 carries the N6-acetyllysine modification. A Phosphothreonine modification is found at Thr-511. Ser-517 carries the post-translational modification Phosphoserine. Residues 524–527 (KANL) carry the Microbody targeting signal; atypical motif.

The protein belongs to the catalase family. Homotetramer. Interacts (via microbody targeting signal) with PEX5, monomeric form interacts with PEX5, leading to its translocation into peroxisomes. Heme is required as a cofactor. It depends on NADP(+) as a cofactor.

The protein localises to the peroxisome matrix. The enzyme catalyses 2 H2O2 = O2 + 2 H2O. In terms of biological role, catalyzes the degradation of hydrogen peroxide (H(2)O(2)) generated by peroxisomal oxidases to water and oxygen, thereby protecting cells from the toxic effects of hydrogen peroxide. Promotes growth of cells including T-cells, B-cells, myeloid leukemia cells, melanoma cells, mastocytoma cells and normal and transformed fibroblast cells. This Bos taurus (Bovine) protein is Catalase (CAT).